The chain runs to 594 residues: Potassium-transporting ATPase potassium-binding subunit (594 aa).

Transmembrane regions (helical) follow at residues 4–24 (QFFG…PFLG), 65–85 (QYAV…YALQ), 136–156 (ALTV…FALI), 179–199 (LYVL…QGVI), 287–307 (LEML…GEMV), 314–334 (VAIL…TQNA), 361–381 (FGVA…CGAV), 390–410 (AMGG…FGGV), 413–433 (GLYG…LMIG), 450–470 (MVSI…ALAV), 518–538 (LLGL…LALA), and 560–580 (LFIV…YVPA).

The protein belongs to the KdpA family. In terms of assembly, the system is composed of three essential subunits: KdpA, KdpB and KdpC.

It is found in the cell inner membrane. Part of the high-affinity ATP-driven potassium transport (or Kdp) system, which catalyzes the hydrolysis of ATP coupled with the electrogenic transport of potassium into the cytoplasm. This subunit binds the periplasmic potassium ions and delivers the ions to the membrane domain of KdpB through an intramembrane tunnel. This Bordetella avium (strain 197N) protein is Potassium-transporting ATPase potassium-binding subunit.